The following is a 59-amino-acid chain: Large ribosomal subunit protein bL32 (59 aa).

The protein belongs to the bacterial ribosomal protein bL32 family.

The protein is Large ribosomal subunit protein bL32 of Desulfitobacterium hafniense (strain Y51).